A 203-amino-acid chain; its full sequence is Urease accessory protein UreG (203 aa).

Glycine 13–threonine 20 serves as a coordination point for GTP.

Belongs to the SIMIBI class G3E GTPase family. UreG subfamily. In terms of assembly, homodimer. UreD, UreF and UreG form a complex that acts as a GTP-hydrolysis-dependent molecular chaperone, activating the urease apoprotein by helping to assemble the nickel containing metallocenter of UreC. The UreE protein probably delivers the nickel.

It is found in the cytoplasm. Its function is as follows. Facilitates the functional incorporation of the urease nickel metallocenter. This process requires GTP hydrolysis, probably effectuated by UreG. The chain is Urease accessory protein UreG from Methylobacillus flagellatus (strain ATCC 51484 / DSM 6875 / VKM B-1610 / KT).